Here is a 300-residue protein sequence, read N- to C-terminus: Ribonuclease HIII (300 aa).

The 215-residue stretch at 86–300 (RSRIGVDESG…FNEVLGSGNQ (215 aa)) folds into the RNase H type-2 domain. A divalent metal cation-binding residues include Asp-92, Glu-93, and Asp-196.

This sequence belongs to the RNase HII family. RnhC subfamily. Mn(2+) is required as a cofactor. Requires Mg(2+) as cofactor.

It is found in the cytoplasm. The enzyme catalyses Endonucleolytic cleavage to 5'-phosphomonoester.. Functionally, endonuclease that specifically degrades the RNA of RNA-DNA hybrids. This chain is Ribonuclease HIII, found in Chlamydia trachomatis serovar A (strain ATCC VR-571B / DSM 19440 / HAR-13).